The following is a 280-amino-acid chain: tRNase Z TRZ1 (280 aa).

It belongs to the RNase Z family. Homodimer. Zn(2+) is required as a cofactor. Ca(2+) serves as cofactor. The cofactor is Mn(2+). Requires Mg(2+) as cofactor.

The protein localises to the cytoplasm. The enzyme catalyses Endonucleolytic cleavage of RNA, removing extra 3' nucleotides from tRNA precursor, generating 3' termini of tRNAs. A 3'-hydroxy group is left at the tRNA terminus and a 5'-phosphoryl group is left at the trailer molecule.. Its function is as follows. Zinc phosphodiesterase, which displays tRNA 3'-processing endonuclease activity. Involved in tRNA maturation, by removing a 3'-trailer from precursor tRNA. Can use bis-(p-nitophenyl) phosphate (bpNPP) as substrate. Involved in the processing of small nucleolar RNAs (snoRNAs). This chain is tRNase Z TRZ1, found in Arabidopsis thaliana (Mouse-ear cress).